The primary structure comprises 413 residues: NPL4-like protein 2 (413 aa).

S104 bears the Phosphoserine mark. Residues 131–272 form the MPN domain; the sequence is SVSFDRDAAN…ADVHFEAFQM (142 aa).

The protein belongs to the NPL4 family.

Its pathway is protein degradation; proteasomal ubiquitin-dependent pathway. Functionally, may be part of a complex that binds ubiquitinated proteins and that is necessary for the export of misfolded proteins from the ER to the cytoplasm, where they are degraded by the proteasome. This is NPL4-like protein 2 from Arabidopsis thaliana (Mouse-ear cress).